A 274-amino-acid polypeptide reads, in one-letter code: 2,3,4,5-tetrahydropyridine-2,6-dicarboxylate N-succinyltransferase (274 aa).

Substrate-binding residues include Arg-104 and Asp-141.

Belongs to the transferase hexapeptide repeat family. In terms of assembly, homotrimer.

It is found in the cytoplasm. The catalysed reaction is (S)-2,3,4,5-tetrahydrodipicolinate + succinyl-CoA + H2O = (S)-2-succinylamino-6-oxoheptanedioate + CoA. Its pathway is amino-acid biosynthesis; L-lysine biosynthesis via DAP pathway; LL-2,6-diaminopimelate from (S)-tetrahydrodipicolinate (succinylase route): step 1/3. The polypeptide is 2,3,4,5-tetrahydropyridine-2,6-dicarboxylate N-succinyltransferase (Shewanella halifaxensis (strain HAW-EB4)).